We begin with the raw amino-acid sequence, 313 residues long: tRNA dimethylallyltransferase (313 aa).

17 to 24 (GPTASGKT) provides a ligand contact to ATP. 19-24 (TASGKT) contacts substrate. Interaction with substrate tRNA stretches follow at residues 42–45 (DSAL), 166–170 (QRLSR), 247–252 (RCVGYR), and 280–287 (KRQITWLR).

Belongs to the IPP transferase family. Monomer. Mg(2+) serves as cofactor.

The catalysed reaction is adenosine(37) in tRNA + dimethylallyl diphosphate = N(6)-dimethylallyladenosine(37) in tRNA + diphosphate. Catalyzes the transfer of a dimethylallyl group onto the adenine at position 37 in tRNAs that read codons beginning with uridine, leading to the formation of N6-(dimethylallyl)adenosine (i(6)A). This is tRNA dimethylallyltransferase from Proteus mirabilis (strain HI4320).